The sequence spans 304 residues: Small glutamine-rich tetratricopeptide repeat-containing protein beta (304 aa).

4 TPR repeats span residues 15-49 (LREQ…SPED), 85-118 (ADQL…DPNN), 119-152 (AVYY…DSKY), and 153-186 (SKAY…DPEN). K131 bears the N6-acetyllysine mark. Residues S293, S295, and S297 each carry the phosphoserine modification.

The protein belongs to the SGT family. In terms of assembly, homooligomerize.

Its function is as follows. Co-chaperone that binds directly to HSC70 and HSP70 and regulates their ATPase activity. This chain is Small glutamine-rich tetratricopeptide repeat-containing protein beta (SGTB), found in Homo sapiens (Human).